A 273-amino-acid polypeptide reads, in one-letter code: Undecaprenyl-diphosphatase (273 aa).

The next 8 membrane-spanning stretches (helical) occupy residues G18–F40, A45–W65, G92–I112, A114–A134, L151–F171, Y189–L209, M225–L245, and F253–G273.

This sequence belongs to the UppP family.

The protein resides in the cell inner membrane. The enzyme catalyses di-trans,octa-cis-undecaprenyl diphosphate + H2O = di-trans,octa-cis-undecaprenyl phosphate + phosphate + H(+). Its function is as follows. Catalyzes the dephosphorylation of undecaprenyl diphosphate (UPP). Confers resistance to bacitracin. This Sodalis glossinidius (strain morsitans) protein is Undecaprenyl-diphosphatase.